The primary structure comprises 230 residues: 5'-methylthioadenosine/S-adenosylhomocysteine nucleosidase (230 aa).

E12 serves as the catalytic Proton acceptor. Substrate-binding positions include G78, I153, and 174–175; that span reads ME. The active-site Proton donor is D198.

It belongs to the PNP/UDP phosphorylase family. MtnN subfamily.

It catalyses the reaction S-adenosyl-L-homocysteine + H2O = S-(5-deoxy-D-ribos-5-yl)-L-homocysteine + adenine. It carries out the reaction S-methyl-5'-thioadenosine + H2O = 5-(methylsulfanyl)-D-ribose + adenine. The enzyme catalyses 5'-deoxyadenosine + H2O = 5-deoxy-D-ribose + adenine. It participates in amino-acid biosynthesis; L-methionine biosynthesis via salvage pathway; S-methyl-5-thio-alpha-D-ribose 1-phosphate from S-methyl-5'-thioadenosine (hydrolase route): step 1/2. Functionally, catalyzes the irreversible cleavage of the glycosidic bond in both 5'-methylthioadenosine (MTA) and S-adenosylhomocysteine (SAH/AdoHcy) to adenine and the corresponding thioribose, 5'-methylthioribose and S-ribosylhomocysteine, respectively. Also cleaves 5'-deoxyadenosine, a toxic by-product of radical S-adenosylmethionine (SAM) enzymes, into 5-deoxyribose and adenine. The sequence is that of 5'-methylthioadenosine/S-adenosylhomocysteine nucleosidase from Shewanella pealeana (strain ATCC 700345 / ANG-SQ1).